The primary structure comprises 514 residues: MAKFLAELLGCTLPEKGASPMFECRSQPHIGLRHVTKQRDKMPQTPPFPVMYGSTNGYNKNLYKAKEEDYEGLYYHDNNLISGSLEALIEHLVPTVAYYPDRTYIFTFLLSSRLFLHPYELMSKVCHLCVDQQRLSDPQADKARVRKIAPKILQLLTEWTETFPYDFRDERMMKSLKELTHRLSTGEDLYRKAVQQMTQTLIRKLTTLSQYEEALAKINSSVTDRLTVLKTKPQSIQRDILTICNDPFTLAQQLTHIELERLSYIGPEEFVQAFVQKDPLDNDKNCFSDHKKASNLEAYVEWFNRLSYLVATEICMPVKKKHRARVIEFFIDVARECFNIGNFNSLMAIITGMNMSPVSRLKKTWAKVKTAKFDILEHQMDPSSNFYNYRTALRGATQRSITAHSSREKIVIPFFSLLIKDIYFLNEGCANRLPNGHVNFEKFWELAKQVTEFMTWKKVECPFDRDRKILQYLLTAPVFSEDALYLASYESEGPENNMEKDRWKSLRSSLLNRT.

Positions 76–206 (HDNNLISGSL…MTQTLIRKLT (131 aa)) constitute an N-terminal Ras-GEF domain. Residues 246-494 (DPFTLAQQLT…YLASYESEGP (249 aa)) form the Ras-GEF domain.

As to expression, detected in oocytes, and in embryos at 4 to 120 hours post-fertilization (hpf). Detected along marginal blastomeres at early epiboly stage and throughout the margin at the onset of gastrulation. At 60% epiboly, strongest expression is found in the dorsal shield region and is restricted to the epiblast. Detected in the anterior border of the presomitic mesoderm at the end of epiboly. Detected in adaxial cells, in the somites and in the nervous system during somitogenesis. Detected in diencephalon and hindbrain and in cells surrounding the notochord, including adaxial cells and ventral mesendoderm, in 15-somite stage embryos. At 48 hpf, detected mainly in the brain.

Guanine nucleotide exchange factor (GEF) for Ras family proteins (in vitro). The sequence is that of Ras-GEF domain-containing family member 1B-A (rasgef1ba) from Danio rerio (Zebrafish).